We begin with the raw amino-acid sequence, 666 residues long: Calcium/calmodulin-dependent protein kinase type II subunit beta (666 aa).

One can recognise a Protein kinase domain in the interval 14–272 (YQLYEDIGKG…AHEALKHPWV (259 aa)). The residue at position 17 (tyrosine 17) is a Phosphotyrosine. Residues 20 to 28 (IGKGAFSVV) and lysine 43 each bind ATP. Catalysis depends on aspartate 136, which acts as the Proton acceptor. The autoinhibitory domain stretch occupies residues 283–292 (HRQETVECLK). A Phosphothreonine; by autocatalysis modification is found at threonine 287. Positions 291–301 (LKKFNARRKLK) are calmodulin-binding. Phosphothreonine; by autocatalysis is present on residues threonine 306 and threonine 307. The interval 349–534 (ADGVKPQTNS…IPGPLPTPSR (186 aa)) is disordered. Residues 354–369 (PQTNSTKNSAAATSPK) show a composition bias toward polar residues. Serine 367, serine 394, and serine 397 each carry phosphoserine. Phosphothreonine occurs at positions 400 and 401. The segment covering 432 to 447 (LPCPSPAPFSPLPAPS) has biased composition (pro residues). Positions 479 to 491 (SPALLGPLSSPSP) are enriched in low complexity. Over residues 514–531 (PVGPPPCPSPTIPGPLPT) the composition is skewed to pro residues.

This sequence belongs to the protein kinase superfamily. CAMK Ser/Thr protein kinase family. CaMK subfamily. As to quaternary structure, CAMK2 is composed of 4 different chains: alpha (CAMK2A), beta (CAMK2B), gamma (CAMK2G), and delta (CAMK2D). The different isoforms assemble into homo- or heteromultimeric holoenzymes composed of 12 subunits with two hexameric rings stacked one on top of the other. Interacts with SYNGAP1 and CAMK2N2. Interacts with MPDZ. Interacts with FOXO3. Interacts (when in a kinase inactive state not associated with calmodulin) with ARC; leading to target ARC to inactive synapses. Interacts with CAMK2N1; this interaction requires CAMK2B activation by Ca(2+). Autophosphorylation of Thr-287 following activation by Ca(2+)/calmodulin. Phosphorylation of Thr-287 locks the kinase into an activated state. As to expression, widely expressed. Expressed in adult and fetal brain. Expression is slightly lower in fetal brain. Expressed in skeletal muscle.

Its subcellular location is the cytoplasm. The protein resides in the cytoskeleton. It is found in the microtubule organizing center. The protein localises to the centrosome. It localises to the sarcoplasmic reticulum membrane. Its subcellular location is the synapse. The enzyme catalyses L-seryl-[protein] + ATP = O-phospho-L-seryl-[protein] + ADP + H(+). The catalysed reaction is L-threonyl-[protein] + ATP = O-phospho-L-threonyl-[protein] + ADP + H(+). With respect to regulation, activated by Ca(2+)/calmodulin. Binding of calmodulin results in conformational change that relieves intrasteric autoinhibition and allows autophosphorylation of Thr-287 which turns the kinase in a constitutively active form and confers to the kinase a Ca(2+)-independent activity. Its function is as follows. Calcium/calmodulin-dependent protein kinase that functions autonomously after Ca(2+)/calmodulin-binding and autophosphorylation, and is involved in dendritic spine and synapse formation, neuronal plasticity and regulation of sarcoplasmic reticulum Ca(2+) transport in skeletal muscle. In neurons, plays an essential structural role in the reorganization of the actin cytoskeleton during plasticity by binding and bundling actin filaments in a kinase-independent manner. This structural function is required for correct targeting of CaMK2A, which acts downstream of NMDAR to promote dendritic spine and synapse formation and maintain synaptic plasticity which enables long-term potentiation (LTP) and hippocampus-dependent learning. In developing hippocampal neurons, promotes arborization of the dendritic tree and in mature neurons, promotes dendritic remodeling. Also regulates the migration of developing neurons. Participates in the modulation of skeletal muscle function in response to exercise. In slow-twitch muscles, is involved in regulation of sarcoplasmic reticulum (SR) Ca(2+) transport and in fast-twitch muscle participates in the control of Ca(2+) release from the SR through phosphorylation of triadin, a ryanodine receptor-coupling factor, and phospholamban (PLN/PLB), an endogenous inhibitor of SERCA2A/ATP2A2. In response to interferon-gamma (IFN-gamma) stimulation, catalyzes phosphorylation of STAT1, stimulating the JAK-STAT signaling pathway. Phosphorylates reticulophagy regulator RETREG1 at 'Ser-151' under endoplasmic reticulum stress conditions which enhances RETREG1 oligomerization and its membrane scission and reticulophagy activity. The polypeptide is Calcium/calmodulin-dependent protein kinase type II subunit beta (CAMK2B) (Homo sapiens (Human)).